A 120-amino-acid chain; its full sequence is Flagellar protein FliT (120 aa).

Positions 1 to 50 (MTNFIPSLTDWHALHALSITMLDLAHSGKWDELIEQEMNYVQLVEGIARN) are required for homodimerization. The segment at 59–97 (LINQAKEILNAVLRNEAELKTLLQHRMEELRQLIDQTGK) is fliD binding.

The protein belongs to the FliT family. As to quaternary structure, homodimer. Interacts with FliD and FlhC.

Its subcellular location is the cytoplasm. The protein resides in the cytosol. Its function is as follows. Dual-function protein that regulates the transcription of class 2 flagellar operons and that also acts as an export chaperone for the filament-capping protein FliD. As a transcriptional regulator, acts as an anti-FlhDC factor; it directly binds FlhC, thus inhibiting the binding of the FlhC/FlhD complex to class 2 promoters, resulting in decreased expression of class 2 flagellar operons. As a chaperone, effects FliD transition to the membrane by preventing its premature polymerization, and by directing it to the export apparatus. The chain is Flagellar protein FliT from Citrobacter koseri (strain ATCC BAA-895 / CDC 4225-83 / SGSC4696).